We begin with the raw amino-acid sequence, 143 residues long: UPF0201 protein PAE1632 (143 aa).

It belongs to the UPF0201 family.

The chain is UPF0201 protein PAE1632 from Pyrobaculum aerophilum (strain ATCC 51768 / DSM 7523 / JCM 9630 / CIP 104966 / NBRC 100827 / IM2).